The primary structure comprises 240 residues: Phosducin-like protein 2 (240 aa).

Residues 54–214 form the Phosducin domain; sequence QRDKKIDDMS…MLGQAGAVPT (161 aa). 2 positions are modified to phosphoserine: S63 and S73. The interval 99–240 is thioredoxin fold; the sequence is FGSVREISGQ…DLEDKSSDFY (142 aa).

It belongs to the phosducin family.

It localises to the cytoplasm. Functionally, modulates the activation of caspases during apoptosis. The chain is Phosducin-like protein 2 from Drosophila melanogaster (Fruit fly).